The chain runs to 307 residues: Thioredoxin-related transmembrane protein 2-B (307 aa).

Residues 1 to 19 (MALLTPLFAFLYHLPQVYK) form the signal peptide. The Extracellular segment spans residues 20-111 (WLLKPYYIAS…VILFFRLDIR (92 aa)). Residues 112–132 (LGLLYLTLCIVFLMTCKPPLY) form a helical membrane-spanning segment. In terms of domain architecture, Thioredoxin spans 132–269 (YMGPEYIKYF…LYQKSKKLGK (138 aa)). The Cytoplasmic segment spans residues 133 to 307 (MGPEYIKYFS…AMDTESKKDK (175 aa)). The segment at 268–307 (GKTKEKLERPSELVFSTVPEEEEPEAETISAMDTESKKDK) is disordered. Over residues 269 to 278 (KTKEKLERPS) the composition is skewed to basic and acidic residues. Positions 304–307 (KKDK) match the Di-lysine motif motif.

In terms of assembly, monomer. Homodimer; disulfide-linked. Occurs in both reduced and oxidized monomeric form. Oxidative conditions increase homodimerization.

Its subcellular location is the endoplasmic reticulum membrane. The protein localises to the mitochondrion membrane. Functionally, endoplasmic reticulum and mitochondria-associated protein that probably functions as a regulator of cellular redox state and thereby regulates protein post-translational modification, protein folding and mitochondrial activity. The protein is Thioredoxin-related transmembrane protein 2-B (tmx2b) of Danio rerio (Zebrafish).